The following is a 314-amino-acid chain: Acetyl-coenzyme A carboxylase carboxyl transferase subunit alpha (314 aa).

In terms of domain architecture, CoA carboxyltransferase C-terminal spans 32 to 289 (EIDMLEASLE…KSAFVAQLDS (258 aa)).

Belongs to the AccA family. In terms of assembly, acetyl-CoA carboxylase is a heterohexamer composed of biotin carboxyl carrier protein (AccB), biotin carboxylase (AccC) and two subunits each of ACCase subunit alpha (AccA) and ACCase subunit beta (AccD).

Its subcellular location is the cytoplasm. It catalyses the reaction N(6)-carboxybiotinyl-L-lysyl-[protein] + acetyl-CoA = N(6)-biotinyl-L-lysyl-[protein] + malonyl-CoA. It functions in the pathway lipid metabolism; malonyl-CoA biosynthesis; malonyl-CoA from acetyl-CoA: step 1/1. Component of the acetyl coenzyme A carboxylase (ACC) complex. First, biotin carboxylase catalyzes the carboxylation of biotin on its carrier protein (BCCP) and then the CO(2) group is transferred by the carboxyltransferase to acetyl-CoA to form malonyl-CoA. This Staphylococcus aureus (strain NCTC 8325 / PS 47) protein is Acetyl-coenzyme A carboxylase carboxyl transferase subunit alpha.